Consider the following 194-residue polypeptide: Ribonuclease VapC1 (194 aa).

The 101-residue stretch at 34–134 folds into the PINc domain; that stretch reads YVIDTSAIIS…TDDYSIQNVA (101 aa). Mg(2+) contacts are provided by aspartate 37 and aspartate 150.

Belongs to the PINc/VapC protein family. The cofactor is Mg(2+).

Toxic component of a type II toxin-antitoxin (TA) system. An RNase. This Thermoplasma acidophilum (strain ATCC 25905 / DSM 1728 / JCM 9062 / NBRC 15155 / AMRC-C165) protein is Ribonuclease VapC1.